We begin with the raw amino-acid sequence, 166 residues long: Polyadenylate-binding protein 2 (166 aa).

Residues Gln55–Thr132 enclose the RRM domain. Residues Pro129–Tyr166 form a disordered region. Basic residues predominate over residues Gly140–Ala160.

Its subcellular location is the nucleus. The polypeptide is Polyadenylate-binding protein 2 (pab2) (Schizosaccharomyces pombe (strain 972 / ATCC 24843) (Fission yeast)).